Reading from the N-terminus, the 325-residue chain is Melanocortin receptor 5 (325 aa).

The Extracellular segment spans residues 1 to 37 (MNSSSTLTVLNLTLNASEDGILGSNVKNKSLACEEMG). 4 N-linked (GlcNAc...) asparagine glycosylation sites follow: Asn-2, Asn-11, Asn-15, and Asn-28. A helical transmembrane segment spans residues 38-61 (IAVEVFLTLGLVSLLENILVIGAI). The Cytoplasmic portion of the chain corresponds to 62–73 (VKNKNLHSPMYF). A helical transmembrane segment spans residues 74–97 (FVGSLAVADMLVSMSNAWETVTIY). At 98–114 (LLNNKHLVIADTFVRHI) the chain is on the extracellular side. Residues 115 to 138 (DNVFDSMICISVVASMCSLLAIAV) traverse the membrane as a helical segment. At 139-155 (DRYITIFYALRYHHIMT) the chain is on the cytoplasmic side. A helical transmembrane segment spans residues 156–179 (ARRSGVIIACIWTFCISCGIVFII). The Extracellular portion of the chain corresponds to 180–186 (YYESKYV). A helical membrane pass occupies residues 187–211 (IICLISMFFTMLFFMVSLYIHMFLL). At 212-239 (ARNHVKRIAASPRYNSVRQRTSMKGAIT) the chain is on the cytoplasmic side. The chain crosses the membrane as a helical span at residues 240-265 (LTMLLGIFIVCWSPFFLHLILMISCP). At 266 to 273 (QNVYCSCF) the chain is on the extracellular side. The chain crosses the membrane as a helical span at residues 274 to 297 (MSYFNMYLILIMCNSVIDPLIYAL). At 298–325 (RSQEMRRTFKEIVCCHGFRRPCRLLGGY) the chain is on the cytoplasmic side. S-palmitoyl cysteine attachment occurs at residues Cys-311 and Cys-312.

This sequence belongs to the G-protein coupled receptor 1 family. As to expression, skin, adrenal gland, skeletal muscle, bone marrow, spleen, thymus, gonads, uterus and brain.

Its subcellular location is the cell membrane. Its function is as follows. Receptor for MSH (alpha, beta and gamma) and ACTH. The activity of this receptor is mediated by G proteins which activate adenylate cyclase. This receptor is a possible mediator of the immunomodulation properties of melanocortins. In Mus musculus (Mouse), this protein is Melanocortin receptor 5 (Mc5r).